Here is a 172-residue protein sequence, read N- to C-terminus: Inorganic pyrophosphatase (172 aa).

Residues lysine 28, arginine 42, and tyrosine 54 each contribute to the substrate site. Positions 64, 69, and 101 each coordinate Mg(2+). Substrate is bound at residue tyrosine 140.

Belongs to the PPase family. As to quaternary structure, homohexamer. Requires Mg(2+) as cofactor.

Its subcellular location is the cytoplasm. The enzyme catalyses diphosphate + H2O = 2 phosphate + H(+). In terms of biological role, catalyzes the hydrolysis of inorganic pyrophosphate (PPi) forming two phosphate ions. In Campylobacter jejuni subsp. jejuni serotype O:2 (strain ATCC 700819 / NCTC 11168), this protein is Inorganic pyrophosphatase.